We begin with the raw amino-acid sequence, 56 residues long: MTEVRVGKDESLDSALKRFKKKLQEDGVLADIRRHEYYEKPSEKRNRKKAQSKKKK.

It belongs to the bacterial ribosomal protein bS21 family.

This is Small ribosomal subunit protein bS21 from Dictyoglomus thermophilum (strain ATCC 35947 / DSM 3960 / H-6-12).